Reading from the N-terminus, the 707-residue chain is NADP(+)-dependent formate dehydrogenase subunit beta (707 aa).

As to quaternary structure, heterotetramer composed of two alpha (FdhA) and two beta (FdhB) subunits.

It is found in the cytoplasm. It catalyses the reaction formate + NADP(+) = CO2 + NADPH. Its activity is regulated as follows. Activity is very sensitive to oxygen. The activity in growing cells is enhanced when selenite and molybdate are added together to the growth medium. Tungstate replaces and is better than molybdate. Selenite is incorporated into the enzyme. Requires a sulfhydryl compound for activity. Inhibited by cyanide, EDTA, hypophosphite and mercaptoethanol. Sulfite inhibits the activity with NADP but not with methyl viologen as electron acceptor. Component of a dehydrogenase that catalyzes the NADP-dependent reduction of CO(2) to formate, the first step in the synthesis of the methyl group of acetate during synthesis of acetate from CO(2). In vitro, can use methyl viologen and benzyl viologen in addition to its natural electron acceptor. This is NADP(+)-dependent formate dehydrogenase subunit beta from Moorella thermoacetica (Clostridium thermoaceticum).